The chain runs to 150 residues: Spore germination protein GerT (150 aa).

It is found in the spore coat. Involved in spore germination. The protein is Spore germination protein GerT (gerT) of Bacillus licheniformis (strain ATCC 14580 / DSM 13 / JCM 2505 / CCUG 7422 / NBRC 12200 / NCIMB 9375 / NCTC 10341 / NRRL NRS-1264 / Gibson 46).